The following is a 58-amino-acid chain: Small ribosomal subunit protein bS21B (58 aa).

Belongs to the bacterial ribosomal protein bS21 family.

The sequence is that of Small ribosomal subunit protein bS21B from Trichormus variabilis (strain ATCC 29413 / PCC 7937) (Anabaena variabilis).